Consider the following 283-residue polypeptide: Gap junction beta-1 protein (283 aa).

Residues 1–22 (MNWTGLYTLLSGVNRHSTAIGR) lie on the Cytoplasmic side of the membrane. The chain crosses the membrane as a helical span at residues 23-45 (VWLSVIFIFRIMVLVVAAESVWG). Residues 46–75 (DEKSSFICNTLQPGCNSVCYDQFFPISHVR) are Extracellular-facing. The chain crosses the membrane as a helical span at residues 76–95 (LWSLQLILVSTPALLVAMHV). Residues 96–130 (AHQQHIEKKMLRLEGHGDPLHLEEVKRHKVHISGT) lie on the Cytoplasmic side of the membrane. Residues 131-153 (LWWAYVISVVFRLLFEAVFMYVF) traverse the membrane as a helical segment. Residues 154 to 191 (YLLYPGYAMVRLVKCDVYPCPNTVDCFVSRPTEKTVFT) are Extracellular-facing. Residues 192–214 (VFMLAASGICIILNVAEVVYLII) form a helical membrane-spanning segment. The Cytoplasmic portion of the chain corresponds to 215–283 (RACARRAQRR…AEKSDRCSAC (69 aa)). A phosphoserine mark is found at S233, S258, S266, and S277.

Belongs to the connexin family. Beta-type (group I) subfamily. A connexon is composed of a hexamer of connexins. Interacts with CNST.

It is found in the cell membrane. It localises to the cell junction. The protein localises to the gap junction. Functionally, one gap junction consists of a cluster of closely packed pairs of transmembrane channels, the connexons, through which materials of low MW diffuse from one cell to a neighboring cell. The chain is Gap junction beta-1 protein (GJB1) from Macaca fascicularis (Crab-eating macaque).